Reading from the N-terminus, the 401-residue chain is UPF0242 protein CCA_01002 (401 aa).

This sequence belongs to the UPF0242 family.

The polypeptide is UPF0242 protein CCA_01002 (Chlamydia caviae (strain ATCC VR-813 / DSM 19441 / 03DC25 / GPIC) (Chlamydophila caviae)).